The primary structure comprises 114 residues: Probable acid stress chaperone HdeA (114 aa).

An N-terminal signal peptide occupies residues 1–26 (MIKTLFNKNTALAAVAILALSGSAMA). Cys46 and Cys94 are oxidised to a cystine.

It belongs to the HdeA family.

The protein resides in the periplasm. Its function is as follows. Required for optimal acid stress protection. Exhibits a chaperone-like activity only at low pH by suppressing non-specifically the aggregation of denaturated periplasmic proteins. In Brucella ovis (strain ATCC 25840 / 63/290 / NCTC 10512), this protein is Probable acid stress chaperone HdeA.